Consider the following 102-residue polypeptide: Gastrin/cholecystokinin-like peptide (102 aa).

The N-terminal stretch at 1–20 (MDKKVCVSILLAMLAIAALC) is a signal peptide. The propeptide occupies 21 to 45 (RPMTELESARHGAQRKNSISDVSRR). Tyr86 carries the sulfotyrosine modification. At Phe92 the chain carries Phenylalanine amide. Residues 96 to 102 (SSEVTES) constitute a propeptide that is removed on maturation.

The protein belongs to the gastrin/cholecystokinin family. In terms of tissue distribution, expressed in antrum, duodenum, colon, pancreas, brain and testis. No expression found in kidney, lung, liver, skin or distal two-thirds of small intestine. In the brain, strongly expressed in the pituitary gland with moderate expression in the neural lobe, brain stem and hypothalamus.

It is found in the secreted. May control digestion processes. The polypeptide is Gastrin/cholecystokinin-like peptide (GAST) (Aquarana catesbeiana (American bullfrog)).